We begin with the raw amino-acid sequence, 640 residues long: Probable potassium transport system protein Kup 2 (640 aa).

A run of 12 helical transmembrane segments spans residues 19–39 (LFSSTTFLLALGSLGVVYGDI), 67–87 (VLSLVFWSMTMVICVKYVVFV), 118–138 (GVVAFAATLGASLLYGDGVIT), 155–175 (EAAKPLVVPLTCVVLLALFLV), 181–201 (GVIGNVFGPIMIVWFVTIAAL), 230–250 (FVGVVVLGSVVLCITGGEALY), 265–285 (WLGLAFPALLLNYFGQGALLL), 307–327 (MVCLSTIATVIASQAMISGVF), 355–375 (VYIPEVNYLLMIACLGLVLVF), 384–404 (AYGIAVTADMALTSILFFFVI), 415–435 (AVPLLVLFLFFDLSYFGANLF), and 437–457 (IFDGGWITLTIAAIVATSMIT).

It belongs to the HAK/KUP transporter (TC 2.A.72) family.

It is found in the cell inner membrane. It carries out the reaction K(+)(in) + H(+)(in) = K(+)(out) + H(+)(out). In terms of biological role, transport of potassium into the cell. Likely operates as a K(+):H(+) symporter. This Syntrophobacter fumaroxidans (strain DSM 10017 / MPOB) protein is Probable potassium transport system protein Kup 2.